Reading from the N-terminus, the 161-residue chain is Probable endopeptidase HI_1314 (161 aa).

The first 18 residues, 1-18 (MKVYKSFLIATASLFLFA), serve as a signal peptide directing secretion. A lipid anchor (N-palmitoyl cysteine) is attached at C19. The S-diacylglycerol cysteine moiety is linked to residue C19. The NlpC/P60 domain maps to 39-161 (IMAIAMLSEQ…SKAFWQVRRI (123 aa)). C69 (nucleophile) is an active-site residue. H122 functions as the Proton acceptor in the catalytic mechanism. The active site involves H134.

This sequence belongs to the peptidase C40 family.

Its subcellular location is the cell membrane. This is Probable endopeptidase HI_1314 from Haemophilus influenzae (strain ATCC 51907 / DSM 11121 / KW20 / Rd).